The chain runs to 157 residues: 2-C-methyl-D-erythritol 2,4-cyclodiphosphate synthase (157 aa).

The a divalent metal cation site is built by D9 and H11. 4-CDP-2-C-methyl-D-erythritol 2-phosphate-binding positions include 9-11 (DVH) and 35-36 (HS). A divalent metal cation is bound at residue H43. 4-CDP-2-C-methyl-D-erythritol 2-phosphate-binding positions include 57 to 59 (DIG), 62 to 66 (FPDTD), 101 to 107 (AEKPKMA), 133 to 136 (TTTE), F140, and R143.

It belongs to the IspF family. In terms of assembly, homotrimer. The cofactor is a divalent metal cation.

The enzyme catalyses 4-CDP-2-C-methyl-D-erythritol 2-phosphate = 2-C-methyl-D-erythritol 2,4-cyclic diphosphate + CMP. The protein operates within isoprenoid biosynthesis; isopentenyl diphosphate biosynthesis via DXP pathway; isopentenyl diphosphate from 1-deoxy-D-xylulose 5-phosphate: step 4/6. In terms of biological role, involved in the biosynthesis of isopentenyl diphosphate (IPP) and dimethylallyl diphosphate (DMAPP), two major building blocks of isoprenoid compounds. Catalyzes the conversion of 4-diphosphocytidyl-2-C-methyl-D-erythritol 2-phosphate (CDP-ME2P) to 2-C-methyl-D-erythritol 2,4-cyclodiphosphate (ME-CPP) with a corresponding release of cytidine 5-monophosphate (CMP). The polypeptide is 2-C-methyl-D-erythritol 2,4-cyclodiphosphate synthase (Listeria monocytogenes serotype 4b (strain CLIP80459)).